We begin with the raw amino-acid sequence, 349 residues long: Mannonate dehydratase (349 aa).

Belongs to the mannonate dehydratase family. Requires Fe(2+) as cofactor. It depends on Mn(2+) as a cofactor.

It carries out the reaction D-mannonate = 2-dehydro-3-deoxy-D-gluconate + H2O. The protein operates within carbohydrate metabolism; pentose and glucuronate interconversion. Catalyzes the dehydration of D-mannonate. The sequence is that of Mannonate dehydratase from Oceanobacillus iheyensis (strain DSM 14371 / CIP 107618 / JCM 11309 / KCTC 3954 / HTE831).